The sequence spans 258 residues: Maintenance of carboxysome distribution protein A (258 aa).

ATP is bound by residues G11, G12, Q13, G14, K15, T16, T17, Q40, E147, K151, F182, R183, L216, E217, S218, and Y221. T16 serves as a coordination point for Mg(2+).

This sequence belongs to the ParA family. McdA subfamily. Homodimerizes in the presence of ATP, making extra nucleotide contacts than with ADP or AMP-PNP. Each subunit binds 1 ATP molecule; Glu-147, Lys-151 and Arg-183 cross the dimer interface to contact ATP in the other subunit, while Phe-182, Arg-183 and Tyr-221 stack with the adenine base in their own subunit. Forms a complex with McdB.

It is found in the cytoplasm. The protein resides in the nucleoid. It catalyses the reaction ATP + H2O = ADP + phosphate + H(+). Its function is as follows. McdA and McdB together mediate carboxysome (Cb) spacing, size, ultrastructure and probably inheritance in the cell, together they prevent Cb aggregation. McdA is an ATPase that forms dynamic gradients on the nucleoid in response to adapter protein McdB, which associates with carboxysomes. The interplay between McdA gradients on the nucleoid and McdB-bound carboxysomes result in the equal spacing of Cbs along the cell length. Binds DNA saturably and strongly in the presence of Mg(2+)ATP; without ATP, DNA-binding is very poor (tested with a mutant that should not be able to hydrolyze ATP, Asp-38-Ala). Decreasing the NaCl concentration increases DNA binding. Functionally, incorrect positioning (aggregation) of carboxysomes results in reduced CO(2) fixation by encapsulated ribulose-1,5-bisphosphate carboxylase (RuBisCO, cbbL/cbbS), which leads to slower growth. The polypeptide is Maintenance of carboxysome distribution protein A (Gloeothece citriformis (strain PCC 7424) (Cyanothece sp. (strain PCC 7424))).